The following is a 156-amino-acid chain: 6,7-dimethyl-8-ribityllumazine synthase (156 aa).

5-amino-6-(D-ribitylamino)uracil-binding positions include Phe23, 57 to 59 (AYE), and 81 to 83 (AII). Residue 86 to 87 (GT) participates in (2S)-2-hydroxy-3-oxobutyl phosphate binding. Catalysis depends on His89, which acts as the Proton donor. Phe114 is a binding site for 5-amino-6-(D-ribitylamino)uracil. (2S)-2-hydroxy-3-oxobutyl phosphate is bound at residue Arg128.

This sequence belongs to the DMRL synthase family.

The catalysed reaction is (2S)-2-hydroxy-3-oxobutyl phosphate + 5-amino-6-(D-ribitylamino)uracil = 6,7-dimethyl-8-(1-D-ribityl)lumazine + phosphate + 2 H2O + H(+). It functions in the pathway cofactor biosynthesis; riboflavin biosynthesis; riboflavin from 2-hydroxy-3-oxobutyl phosphate and 5-amino-6-(D-ribitylamino)uracil: step 1/2. Catalyzes the formation of 6,7-dimethyl-8-ribityllumazine by condensation of 5-amino-6-(D-ribitylamino)uracil with 3,4-dihydroxy-2-butanone 4-phosphate. This is the penultimate step in the biosynthesis of riboflavin. This chain is 6,7-dimethyl-8-ribityllumazine synthase, found in Helicobacter pylori (strain HPAG1).